A 199-amino-acid polypeptide reads, in one-letter code: Thymidine kinase (199 aa).

ATP-binding positions include 23–30 (GSMFSGKT) and 95–98 (DEAQ). The Proton acceptor role is filled by glutamate 96. The Zn(2+) site is built by cysteine 152, cysteine 155, cysteine 184, and cysteine 187.

It belongs to the thymidine kinase family. Homotetramer.

It is found in the cytoplasm. It carries out the reaction thymidine + ATP = dTMP + ADP + H(+). This Bacteroides fragilis (strain ATCC 25285 / DSM 2151 / CCUG 4856 / JCM 11019 / LMG 10263 / NCTC 9343 / Onslow / VPI 2553 / EN-2) protein is Thymidine kinase.